A 422-amino-acid polypeptide reads, in one-letter code: Anhydromevalonate phosphate decarboxylase (422 aa).

Residues Asn134 and Glu197 each contribute to the Mn(2+) site. Residue Asp244 is the Proton acceptor of the active site.

This sequence belongs to the UbiD family. It depends on prenylated FMN as a cofactor. Mn(2+) is required as a cofactor.

It catalyses the reaction (2E)-3-methyl-5-phosphooxypent-2-enoate + H(+) = isopentenyl phosphate + CO2. The protein operates within isoprenoid biosynthesis; isopentenyl diphosphate biosynthesis via mevalonate pathway. Its function is as follows. Catalyzes the conversion of trans-anhydromevalonate 5-phosphate (tAHMP) into isopentenyl phosphate. Involved in the archaeal mevalonate (MVA) pathway, which provides fundamental precursors for isoprenoid biosynthesis, such as isopentenyl diphosphate (IPP) and dimethylallyl diphosphate (DMAPP). The polypeptide is Anhydromevalonate phosphate decarboxylase (Methanosarcina mazei (strain ATCC BAA-159 / DSM 3647 / Goe1 / Go1 / JCM 11833 / OCM 88) (Methanosarcina frisia)).